The sequence spans 61 residues: Transcription elongation factor Spt4 (61 aa).

Zn(2+) is bound by residues cysteine 6, cysteine 9, cysteine 18, and cysteine 21.

The protein belongs to the archaeal Spt4 family. Heterodimer composed of Spt4 and Spt5.

Stimulates transcription elongation. The sequence is that of Transcription elongation factor Spt4 from Pyrococcus furiosus (strain ATCC 43587 / DSM 3638 / JCM 8422 / Vc1).